A 437-amino-acid polypeptide reads, in one-letter code: Enolase (437 aa).

Gln-166 provides a ligand contact to (2R)-2-phosphoglycerate. Glu-208 serves as the catalytic Proton donor. Mg(2+)-binding residues include Asp-245, Glu-295, and Asp-322. The (2R)-2-phosphoglycerate site is built by Lys-347, Arg-376, Ser-377, and Lys-398. The active-site Proton acceptor is the Lys-347.

This sequence belongs to the enolase family. Mg(2+) is required as a cofactor.

It is found in the cytoplasm. It localises to the secreted. Its subcellular location is the cell surface. It carries out the reaction (2R)-2-phosphoglycerate = phosphoenolpyruvate + H2O. The protein operates within carbohydrate degradation; glycolysis; pyruvate from D-glyceraldehyde 3-phosphate: step 4/5. Functionally, catalyzes the reversible conversion of 2-phosphoglycerate (2-PG) into phosphoenolpyruvate (PEP). It is essential for the degradation of carbohydrates via glycolysis. The chain is Enolase from Lachnoclostridium phytofermentans (strain ATCC 700394 / DSM 18823 / ISDg) (Clostridium phytofermentans).